We begin with the raw amino-acid sequence, 363 residues long: Cysteine proteinase 15A (363 aa).

The first 18 residues, 1 to 18, serve as a signal peptide directing secretion; sequence MDRRFLFALFLFAAVATA. A propeptide spans 19 to 131 (activation peptide); that stretch reads VTDDTNNDDF…QKAPILPTTN (113 aa). Cystine bridges form between Cys153/Cys203 and Cys187/Cys236. Cys156 is a catalytic residue. Asn249 carries an N-linked (GlcNAc...) asparagine glycan. An intrachain disulfide couples Cys292 to Cys347. Residues His299 and Asn326 contribute to the active site.

Belongs to the peptidase C1 family.

The chain is Cysteine proteinase 15A from Pisum sativum (Garden pea).